Here is a 271-residue protein sequence, read N- to C-terminus: ATP synthase subunit a (271 aa).

5 consecutive transmembrane segments (helical) span residues 38–58 (FWTLNIDSMFFSVVLGLLFLL), 100–120 (LIAPLALTIFVWVFLMNLMDL), 146–166 (DVNITLSMALGVFILILFYSI), 220–240 (LIFILIAGLLPWWSQWILNVP), and 242–262 (AIFHILIITLQAFIFMGLTIV).

The protein belongs to the ATPase A chain family. In terms of assembly, F-type ATPases have 2 components, CF(1) - the catalytic core - and CF(0) - the membrane proton channel. CF(1) has five subunits: alpha(3), beta(3), gamma(1), delta(1), epsilon(1). CF(0) has three main subunits: a(1), b(2) and c(9-12). The alpha and beta chains form an alternating ring which encloses part of the gamma chain. CF(1) is attached to CF(0) by a central stalk formed by the gamma and epsilon chains, while a peripheral stalk is formed by the delta and b chains.

It localises to the cell inner membrane. Functionally, key component of the proton channel; it plays a direct role in the translocation of protons across the membrane. The chain is ATP synthase subunit a from Citrobacter koseri (strain ATCC BAA-895 / CDC 4225-83 / SGSC4696).